A 340-amino-acid polypeptide reads, in one-letter code: Diacylglycerol acyltransferase/mycolyltransferase Ag85C (340 aa).

The first 45 residues, 1 to 45, serve as a signal peptide directing secretion; the sequence is MTFFEQVRRLRSAATTLPRRLAIAAMGAVLVYGLVGTFGGPATAG. 86-87 is a substrate binding site; it reads LR. The fibronectin-binding stretch occupies residues 102–112; sequence FEEYYQSGLSV. Substrate-binding residues include serine 170 and asparagine 198. Catalysis depends on serine 170, which acts as the Nucleophile. Glutamate 274 is an active-site residue. Residues 276-279 and 306-308 contribute to the substrate site; these read LTLR and HSW. Residue histidine 306 is part of the active site.

It belongs to the mycobacterial A85 antigen family. As to quaternary structure, homodimer.

The protein resides in the secreted. It carries out the reaction an acyl-CoA + a 1,2-diacyl-sn-glycerol = a triacyl-sn-glycerol + CoA. It catalyses the reaction 2 alpha,alpha'-trehalose 6-mycolate = alpha,alpha'-trehalose 6,6'-bismycolate + alpha,alpha-trehalose. Its function is as follows. The antigen 85 proteins (FbpA, FbpB, FbpC) are responsible for the high affinity of mycobacteria to fibronectin, a large adhesive glycoprotein, which facilitates the attachment of M.tuberculosis to murine alveolar macrophages (AMs). They also help to maintain the integrity of the cell wall by catalyzing the transfer of mycolic acids to cell wall arabinogalactan and through the synthesis of alpha,alpha-trehalose dimycolate (TDM, cord factor). They catalyze the transfer of a mycoloyl residue from one molecule of alpha,alpha-trehalose monomycolate (TMM) to another TMM, leading to the formation of TDM. This is Diacylglycerol acyltransferase/mycolyltransferase Ag85C (fbpC) from Mycobacterium bovis (strain ATCC BAA-935 / AF2122/97).